The chain runs to 469 residues: Dihydrolipoyl dehydrogenase (469 aa).

Residues glutamate 34–cysteine 42, lysine 51, and glycine 114 each bind FAD. An intrachain disulfide couples cysteine 42 to cysteine 47. NAD(+) is bound by residues glycine 179–isoleucine 183, glutamate 202, and serine 269–phenylalanine 272. 2 residues coordinate FAD: aspartate 312 and alanine 320. Histidine 448 serves as the catalytic Proton acceptor.

The protein belongs to the class-I pyridine nucleotide-disulfide oxidoreductase family. Homodimer. Part of an unusual ODH/PDH supercomplex, consisting of AceE (E1), AceF (E2), and Lpd (E3) together with OdhA (E1+E2). It depends on FAD as a cofactor.

Its subcellular location is the cytoplasm. The enzyme catalyses N(6)-[(R)-dihydrolipoyl]-L-lysyl-[protein] + NAD(+) = N(6)-[(R)-lipoyl]-L-lysyl-[protein] + NADH + H(+). The protein operates within carbohydrate metabolism; tricarboxylic acid cycle; succinyl-CoA from 2-oxoglutarate (dehydrogenase route): step 1/1. In terms of biological role, lipoamide dehydrogenase is an essential component of the pyruvate dehydrogenase (PDH) and 2-oxoglutarate dehydrogenase (ODH) complexes. Catalyzes the reoxidation of dihydrolipoyl groups which are covalently attached to the lipoate acyltransferase components (E2) of the complexes. Also catalyzes a reversible NADH:NAD(+) transhydrogenation, and is able to transfer electrons from NADH to various redox-active compounds and quinones. May be involved in quinone redox cycling in C.glutamicum. This chain is Dihydrolipoyl dehydrogenase (lpd), found in Corynebacterium glutamicum (strain ATCC 13032 / DSM 20300 / JCM 1318 / BCRC 11384 / CCUG 27702 / LMG 3730 / NBRC 12168 / NCIMB 10025 / NRRL B-2784 / 534).